Here is a 277-residue protein sequence, read N- to C-terminus: MTPSIPVVVAGALGRMGAEVIKAVVGSADCMLVGAIDNTPGKEGSDIGLELGLGELEVAVTADFEGCLCAVSQSVRDAEAGAVLVDFTHPSVVYEHTRAAIAYGVHPVIGTTGLSPEQLSDLCQFAAKASIGGAVIPNFSVGMVLLQQAAAAAARFYDHAELTELHHNCKADAPSGTCIKTAELMEELGKSFNPAEVDEHESLAGSRGGRRESGLRLHSLRLPGLVAHQEVMFGAPGETYTLRHDTIDRSAYMPGVLLTVRKVRSLQTLVYGLERLI.

NAD(+)-binding positions include 11-16 (GALGRM) and 110-112 (GTT). The active-site Proton donor/acceptor is the H166. H167 contributes to the (S)-2,3,4,5-tetrahydrodipicolinate binding site. K170 acts as the Proton donor in catalysis. 176 to 177 (GT) contacts (S)-2,3,4,5-tetrahydrodipicolinate.

It belongs to the DapB family.

It is found in the cytoplasm. It catalyses the reaction (S)-2,3,4,5-tetrahydrodipicolinate + NAD(+) + H2O = (2S,4S)-4-hydroxy-2,3,4,5-tetrahydrodipicolinate + NADH + H(+). The enzyme catalyses (S)-2,3,4,5-tetrahydrodipicolinate + NADP(+) + H2O = (2S,4S)-4-hydroxy-2,3,4,5-tetrahydrodipicolinate + NADPH + H(+). The protein operates within amino-acid biosynthesis; L-lysine biosynthesis via DAP pathway; (S)-tetrahydrodipicolinate from L-aspartate: step 4/4. Its function is as follows. Catalyzes the conversion of 4-hydroxy-tetrahydrodipicolinate (HTPA) to tetrahydrodipicolinate. This Parasynechococcus marenigrum (strain WH8102) protein is 4-hydroxy-tetrahydrodipicolinate reductase.